Reading from the N-terminus, the 477-residue chain is Glycogen synthase (477 aa).

Lys15 is an ADP-alpha-D-glucose binding site.

It belongs to the glycosyltransferase 1 family. Bacterial/plant glycogen synthase subfamily.

The catalysed reaction is [(1-&gt;4)-alpha-D-glucosyl](n) + ADP-alpha-D-glucose = [(1-&gt;4)-alpha-D-glucosyl](n+1) + ADP + H(+). It functions in the pathway glycan biosynthesis; glycogen biosynthesis. Functionally, synthesizes alpha-1,4-glucan chains using ADP-glucose. The sequence is that of Glycogen synthase from Cronobacter sakazakii (strain ATCC BAA-894) (Enterobacter sakazakii).